A 583-amino-acid polypeptide reads, in one-letter code: Ferredoxin--nitrite reductase, chloroplastic (583 aa).

The N-terminal 22 residues, 1–22, are a transit peptide targeting the chloroplast; that stretch reads MSSLSVRFLSPPLFSSTPAWPR. Positions 461, 467, 502, and 506 each coordinate [4Fe-4S] cluster. Cysteine 506 is a binding site for siroheme.

This sequence belongs to the nitrite and sulfite reductase 4Fe-4S domain family. As to quaternary structure, monomer. Siroheme is required as a cofactor. Requires [4Fe-4S] cluster as cofactor.

It localises to the plastid. Its subcellular location is the chloroplast. It carries out the reaction 6 oxidized [2Fe-2S]-[ferredoxin] + NH4(+) + 2 H2O = nitrite + 6 reduced [2Fe-2S]-[ferredoxin] + 8 H(+). It participates in nitrogen metabolism; nitrate reduction (assimilation). The chain is Ferredoxin--nitrite reductase, chloroplastic (NIR1) from Betula pendula (European white birch).